A 356-amino-acid polypeptide reads, in one-letter code: MIREIDKNYMKLALSLAKKRKGYTHPNPTVGAVVVKEGKIVGLGYHEKAGKPHAEVMALGQAGEKAKGATLYVTLEPCTHFGRTPPCTDAIIRSGIKRVVVATLDPNPLMSGKGVEKLRNAGIEVDVGVCEEEARELNEDFFTYITQERPYITLKWAQTLDGKLATLTGSSKWITSKESRKVAHILRREATAVLVGVNTVIKDDPHLTVRFVPTEKQPVRIILDPELEVPLSAKVLNTEEAPTIVITKKENEKAEKLKEKGVQVLILKGFNLKNILKKLKELEIMHLMVEGGPRTLTSFLKEGFFDRIVVFIAPKIMGEGLSIGDLGIRSIEESLKVRKKKVENLGEDLVIFFKRY.

Residues 1 to 148 (MIREIDKNYM…EDFFTYITQE (148 aa)) form a deaminase region. The CMP/dCMP-type deaminase domain maps to 4 to 126 (EIDKNYMKLA…KLRNAGIEVD (123 aa)). Zn(2+) is bound at residue His-53. The Proton donor role is filled by Glu-55. Zn(2+)-binding residues include Cys-78 and Cys-87. Positions 149-356 (RPYITLKWAQ…EDLVIFFKRY (208 aa)) are reductase. An NADP(+)-binding site is contributed by Ala-157. Ser-171 is a binding site for substrate. Residue Trp-173 coordinates NADP(+). Arg-187 is a substrate binding site. 2 residues coordinate NADP(+): Thr-199 and Asp-203. Positions 207, 210, and 290 each coordinate substrate. Residue 292–298 (GPRTLTS) participates in NADP(+) binding.

The protein in the N-terminal section; belongs to the cytidine and deoxycytidylate deaminase family. In the C-terminal section; belongs to the HTP reductase family. Requires Zn(2+) as cofactor.

The catalysed reaction is 2,5-diamino-6-hydroxy-4-(5-phosphoribosylamino)-pyrimidine + H2O + H(+) = 5-amino-6-(5-phospho-D-ribosylamino)uracil + NH4(+). It carries out the reaction 5-amino-6-(5-phospho-D-ribitylamino)uracil + NADP(+) = 5-amino-6-(5-phospho-D-ribosylamino)uracil + NADPH + H(+). Its pathway is cofactor biosynthesis; riboflavin biosynthesis; 5-amino-6-(D-ribitylamino)uracil from GTP: step 2/4. It participates in cofactor biosynthesis; riboflavin biosynthesis; 5-amino-6-(D-ribitylamino)uracil from GTP: step 3/4. In terms of biological role, converts 2,5-diamino-6-(ribosylamino)-4(3h)-pyrimidinone 5'-phosphate into 5-amino-6-(ribosylamino)-2,4(1h,3h)-pyrimidinedione 5'-phosphate. The chain is Riboflavin biosynthesis protein RibD (ribD) from Aquifex aeolicus (strain VF5).